We begin with the raw amino-acid sequence, 84 residues long: ATP synthase subunit c (84 aa).

The next 2 membrane-spanning stretches (helical) occupy residues 10–30 and 53–73; these read IAVGIIVGLASLGTAIGFALL and FIIAGLLDAVPMIGIVIALLF.

It belongs to the ATPase C chain family. As to quaternary structure, F-type ATPases have 2 components, F(1) - the catalytic core - and F(0) - the membrane proton channel. F(1) has five subunits: alpha(3), beta(3), gamma(1), delta(1), epsilon(1). F(0) has three main subunits: a(1), b(2) and c(10-14). The alpha and beta chains form an alternating ring which encloses part of the gamma chain. F(1) is attached to F(0) by a central stalk formed by the gamma and epsilon chains, while a peripheral stalk is formed by the delta and b chains.

Its subcellular location is the cell inner membrane. In terms of biological role, f(1)F(0) ATP synthase produces ATP from ADP in the presence of a proton or sodium gradient. F-type ATPases consist of two structural domains, F(1) containing the extramembraneous catalytic core and F(0) containing the membrane proton channel, linked together by a central stalk and a peripheral stalk. During catalysis, ATP synthesis in the catalytic domain of F(1) is coupled via a rotary mechanism of the central stalk subunits to proton translocation. Functionally, key component of the F(0) channel; it plays a direct role in translocation across the membrane. A homomeric c-ring of between 10-14 subunits forms the central stalk rotor element with the F(1) delta and epsilon subunits. In Vibrio alginolyticus, this protein is ATP synthase subunit c.